We begin with the raw amino-acid sequence, 1365 residues long: Serine-aspartate repeat-containing protein D (1365 aa).

The signal sequence occupies residues 1–35 (MLNRENKTAITRKGMVSNRLNKFSIRKYTVGTASI). Residues 23–34 (FSIRKYTVGTAS) carry the YSIRK-G/S signaling motif motif. Residues 36–568 (LVGTTLIFGL…NNQSGGAGQE (533 aa)) form a ligand binding A region region. Residues 54–185 (ESTNKELNEA…NKKVDAKTES (132 aa)) form a disordered region. 2 stretches are compositionally biased toward polar residues: residues 62 to 71 (EATTSASDNQ) and 94 to 109 (EMVSSQGNETTSNGNK). The segment covering 130-145 (KSDEQASPKSTNEDLN) has biased composition (basic and acidic residues). Polar residues-rich tracts occupy residues 146–155 (TKQTISNQEA) and 163–173 (NKSVVNAQPTN). The span at 174–183 (EENKKVDAKT) shows a compositional bias: basic and acidic residues. CNA-B domains are found at residues 569 to 680 (VYKI…IYKP), 681 to 791 (KYNL…YKTP), 792 to 901 (KYNL…FYKP), 902 to 1012 (TYNL…YKTP), and 1013 to 1123 (KYSL…EEDT). 3 disordered regions span residues 857–884 (ETPSGYTPTQVGSGTDEGIDSNGTSTTG), 972–991 (YTPTSVTSGNDTEKDSNGLT), and 1078–1341 (EKPA…SNNA). Polar residues-rich tracts occupy residues 860–869 (SGYTPTQVGS) and 972–981 (YTPTSVTSGN). 2 stretches are compositionally biased toward acidic residues: residues 1091–1101 (TEDDKDADGGE) and 1118–1304 (YFEE…DSDS). The LPXTG sorting signal signature appears at 1328-1332 (LPETG). Position 1331 is a pentaglycyl murein peptidoglycan amidated threonine (threonine 1331). A propeptide spans 1332–1365 (GNENSGSNNATLFGGLFAALGSLLLFGRRKKQNK) (removed by sortase).

It belongs to the serine-aspartate repeat-containing protein (SDr) family. As to quaternary structure, interacts with host DSG1; this interaction increases S.aureus adherence to keratinocytes.

The protein localises to the secreted. It localises to the cell wall. In terms of biological role, cell surface-associated calcium-binding protein which plays an important role in adhesion and pathogenesis. Mediates interactions with components of the extracellular matrix such as host DSG1 to promote bacterial adhesion to host cells. Contributes to the resistance to killing by innate immune components such as neutrophils present in blood and thus attenuates bacterial clearance. This is Serine-aspartate repeat-containing protein D (sdrD) from Staphylococcus aureus (strain MSSA476).